Consider the following 237-residue polypeptide: 2-C-methyl-D-erythritol 4-phosphate cytidylyltransferase (237 aa).

Belongs to the IspD/TarI cytidylyltransferase family. IspD subfamily.

It catalyses the reaction 2-C-methyl-D-erythritol 4-phosphate + CTP + H(+) = 4-CDP-2-C-methyl-D-erythritol + diphosphate. Its pathway is isoprenoid biosynthesis; isopentenyl diphosphate biosynthesis via DXP pathway; isopentenyl diphosphate from 1-deoxy-D-xylulose 5-phosphate: step 2/6. In terms of biological role, catalyzes the formation of 4-diphosphocytidyl-2-C-methyl-D-erythritol from CTP and 2-C-methyl-D-erythritol 4-phosphate (MEP). The protein is 2-C-methyl-D-erythritol 4-phosphate cytidylyltransferase of Clostridioides difficile (strain 630) (Peptoclostridium difficile).